Here is a 265-residue protein sequence, read N- to C-terminus: Probable cell division protein kinase ECU08_0230 (265 aa).

Residues 4-263 (YILGALIGSG…IMEILENEYG (260 aa)) form the Protein kinase domain. ATP is bound by residues 10-18 (IGSGTYGEV) and Lys-33. Asp-121 functions as the Proton acceptor in the catalytic mechanism.

It belongs to the protein kinase superfamily. CMGC Ser/Thr protein kinase family. CDC2/CDKX subfamily.

The protein resides in the nucleus. It carries out the reaction L-seryl-[protein] + ATP = O-phospho-L-seryl-[protein] + ADP + H(+). It catalyses the reaction L-threonyl-[protein] + ATP = O-phospho-L-threonyl-[protein] + ADP + H(+). May play a role in the control of the eukaryotic cell cycle. This Encephalitozoon cuniculi (strain GB-M1) (Microsporidian parasite) protein is Probable cell division protein kinase ECU08_0230.